We begin with the raw amino-acid sequence, 163 residues long: Phosphopantetheine adenylyltransferase (163 aa).

Ser-11 contributes to the substrate binding site. ATP-binding positions include 11–12 (SF) and His-19. Positions 43, 76, and 90 each coordinate substrate. ATP contacts are provided by residues 91–93 (GLR), Glu-101, and 126–132 (WQALSSS).

The protein belongs to the bacterial CoaD family. As to quaternary structure, homohexamer. The cofactor is Mg(2+).

It is found in the cytoplasm. It carries out the reaction (R)-4'-phosphopantetheine + ATP + H(+) = 3'-dephospho-CoA + diphosphate. Its pathway is cofactor biosynthesis; coenzyme A biosynthesis; CoA from (R)-pantothenate: step 4/5. Functionally, reversibly transfers an adenylyl group from ATP to 4'-phosphopantetheine, yielding dephospho-CoA (dPCoA) and pyrophosphate. This is Phosphopantetheine adenylyltransferase from Streptococcus pyogenes serotype M6 (strain ATCC BAA-946 / MGAS10394).